Consider the following 2842-residue polypeptide: Adenomatous polyposis coli protein (2842 aa).

N-acetylalanine is present on Ala2. Positions 2-62 (AAASYDQLLK…GSIEDETMTS (61 aa)) form a coiled coil. A phosphoserine mark is found at Ser105 and Ser109. Residues 125–260 (SRESTGYLEE…ASHEAERQLE (136 aa)) are a coiled coil. A disordered region spans residues 238–304 (AEAERSSQSK…THSAPRRLTS (67 aa)). Over residues 239–259 (EAERSSQSKHETASHEAERQL) the composition is skewed to basic and acidic residues. Over residues 268 to 279 (NLATSGSGQSSA) the composition is skewed to polar residues. ARM repeat units lie at residues 451-493 (LMKL…HYSV), 503-545 (LTNL…IASV), 546-589 (LRNL…VLSA), 590-636 (LWNL…GGGI), 637-681 (LRNV…ACGT), 682-723 (LWNL…SAAA), and 724-765 (LRNL…LDAQ). A phosphoserine mark is found at Ser742, Ser746, and Ser778. Residues 828-877 (VLPSSSSSRGSLDSSRSEKDRSLERERGIGLSTYHSATENPGTSSKRGLQ) are disordered. Low complexity predominate over residues 831-841 (SSSSSRGSLDS). Residues 842 to 855 (SRSEKDRSLERERG) show a composition bias toward basic and acidic residues. The segment covering 860–877 (TYHSATENPGTSSKRGLQ) has biased composition (polar residues). The residue at position 906 (Ser906) is a Phosphoserine. Disordered stretches follow at residues 921 to 942 (RRSS…ESSN) and 956 to 988 (RSSN…SEDD). A compositionally biased stretch (polar residues) spans 931–942 (NTHNFAKSESSN). A compositionally biased stretch (low complexity) spans 959–969 (NDSLNSVTSSD). Phosphoserine is present on residues Ser985, Ser1036, and Ser1040. Residues 1018–1167 (ELDTPINYSL…TNYSIKYNEE (150 aa)) form an interaction with catenins region. Disordered stretches follow at residues 1058-1078 (IKQN…VYSE), 1092-1166 (GQQE…KYNE), 1188-1249 (SQKP…CKVP), and 1306-1373 (ENDV…PEHY). 2 stretches are compositionally biased toward polar residues: residues 1066-1078 (SRSQ…VYSE) and 1103-1128 (RGTN…QSLC). The segment covering 1144-1157 (RYSEEEQHEEEERP) has biased composition (basic and acidic residues). Low complexity-rich tracts occupy residues 1188–1200 (SQKP…KTPS) and 1209–1223 (NSPS…SSNA). Composition is skewed to polar residues over residues 1224–1242 (KRQS…QTPK) and 1323–1340 (VSQS…SGLA). Over residues 1352 to 1363 (SSGAKSPSKSGA) the composition is skewed to low complexity. Residues Ser1357, Ser1368, Ser1382, Ser1389, and Ser1392 each carry the phosphoserine modification. 4 disordered regions span residues 1398–1474 (IASS…VSAA), 1525–1568 (PPVQ…SDDD), 1584–1609 (KSSR…KPSQ), and 1661–1711 (ESPP…IPDL). Position 1435 is a phosphothreonine (Thr1435). Pro residues predominate over residues 1435–1444 (TPPPPPPPQP). The segment covering 1532 to 1546 (NGNETEPEQPEESNE) has biased composition (acidic residues). Positions 1547–1562 (NQDKEVEKPDSEKDLL) are enriched in basic and acidic residues. At Ser1565 the chain carries Phosphoserine. Positions 1681–1700 (EFEKRDTIPTEGRSTDEAQR) are enriched in basic and acidic residues. Position 1714 is a phosphoserine (Ser1714). Residues 1748-1762 (VQQASMTSSGTNKNQ) are compositionally biased toward polar residues. 3 disordered regions span residues 1748 to 1950 (VQQA…EKLQ), 1963 to 2010 (RNSS…APKS), and 2043 to 2067 (SSAM…PRKV). A Phosphoserine modification is found at Ser1772. Composition is skewed to basic and acidic residues over residues 1783–1792 (YRTRVRKNTD) and 1804–1833 (SDNK…DRVR). Ser1859, Ser1861, and Ser1862 each carry phosphoserine. Residues 1864 to 1891 (DFDDDDVDLSREKAELRKGKESKDSEAK) are highly charged. A compositionally biased stretch (basic and acidic residues) spans 1871–1894 (DLSREKAELRKGKESKDSEAKVTC). The span at 1899–1911 (SSSQQSARKAQAS) shows a compositional bias: low complexity. Positions 1927–1936 (EQPTFPQSSK) are enriched in polar residues. Basic and acidic residues predominate over residues 1937-1949 (DVPDRGAATDEKL). Phosphoserine is present on residues Ser1969 and Ser1971. Positions 2034 to 2058 (EDDLLRECISSAMPKKRRPSRLKGE) are interaction with AXIN1. Phosphoserine occurs at positions 2087, 2092, 2125, 2129, 2130, and 2132. 3 disordered regions span residues 2148–2173 (FHLT…PGEK), 2234–2641 (PGVR…AESK), and 2664–2842 (CPIN…VTSV). At Thr2151 the chain carries Phosphothreonine. The interval 2167-2674 (ILKPGEKSTL…PINNPRSGRS (508 aa)) is basic region. Composition is skewed to polar residues over residues 2257–2272 (ASKS…TSPR) and 2283–2347 (SPIT…QLPR). Phosphoserine is present on residues Ser2260, Ser2270, and Ser2283. A compositionally biased stretch (low complexity) spans 2348 to 2369 (TSSPSTASTKSSGSGKMSYTSP). Composition is skewed to polar residues over residues 2370 to 2411 (GRQL…NGSN) and 2418 to 2427 (RMSSTKSSGS). Residues 2459–2477 (SASFESLSPSSRPDSPTRS) are compositionally biased toward low complexity. A phosphoserine mark is found at Ser2473 and Ser2535. Positions 2475–2842 (TRSQAQTPVL…HSGSYLVTSV (368 aa)) are interaction with DLG1. Over residues 2518-2535 (SDGRPSKRHDIARSHSES) the composition is skewed to basic and acidic residues. Positions 2555-2568 (SSSLPRVSTWRRTG) are enriched in polar residues. Ser2569 bears the Phosphoserine mark. Residues 2569-2579 (SSSSILSASSE) are compositionally biased toward low complexity. The segment covering 2580–2592 (SSEKAKSEDEKHV) has biased composition (basic and acidic residues). Positions 2629 to 2638 (TTSSGAASGA) are enriched in low complexity. Polar residues-rich tracts occupy residues 2668-2679 (NPRSGRSPTGNT) and 2702-2713 (GKQSVGSGSPVQ). 2 positions are modified to phosphoserine: Ser2671 and Ser2674. Residues 2674 to 2842 (SPTGNTPPVI…HSGSYLVTSV (169 aa)) form an interaction with MAPRE1 region. Position 2679 is a phosphothreonine (Thr2679). Ser2710 and Ser2723 each carry phosphoserine. A compositionally biased stretch (low complexity) spans 2762 to 2773 (SSSSSSKHSSPS). Polar residues predominate over residues 2783–2809 (FNYNPSPRKSSADSTSARPSQIPTPVG). A Phosphoserine modification is found at Ser2788. The Microtubule tip localization signal motif lies at 2802–2805 (SQIP). The short motif at 2840–2842 (TSV) is the PDZ-binding element.

This sequence belongs to the adenomatous polyposis coli (APC) family. As to quaternary structure, forms homooligomers. Found in a complex consisting of ARHGEF4, APC and CTNNB1. Found in a complex composed of MACF1, APC, AXIN1, CTNNB1 and GSK3B. The complex composed, at least, of APC, CTNNB1 and GSK3B interacts with JPT1; the interaction requires the inactive form of GSK3B (phosphorylated at 'Ser-9'). Interacts with APC2. Interacts with DLG1 (via PDZ domains) and DLG3 (via PDZ domains). Interacts with alpha- and beta-catenins. Interacts with AXIN1 (via RGS domain). Interacts with ARHGEF4 (via N-terminus). Interacts (via C-terminal residues 2674-2843) with MAPRE1 (via C-terminal residues 206-211); the interaction inhibits association with and bundling of F-actin. Interacts with MAPRE2 and MAPRE3 (via C-terminus). Interacts with DIAPH1; DIAPH1 acts as a scaffold protein for MAPRE1 and APC to stabilize microtubules and promote cell migration. Interacts with DIAPH2. Interacts with SCRIB; may mediate APC targeting to adherens junctions of epithelial cells. Interacts with SPATA13 (via N-terminus and SH3 domain). Interacts with ASAP1 (via SH3 domain). Interacts (at the cell membrane) with AMER1 and AMER2 (via ARM repeats). Interacts with KHDRBS1. Interacts with actin; binds both to F-actin and actin filament bundles. Post-translationally, phosphorylated; phosphorylation enhances the F-actin bundling activity. Phosphorylated by GSK3B. In terms of processing, ubiquitinated, leading to its degradation by the proteasome. Ubiquitination is facilitated by Axin. Deubiquitinated by ZRANB1/TRABID.

The protein resides in the cell junction. It is found in the adherens junction. The protein localises to the cytoplasm. Its subcellular location is the cytoskeleton. It localises to the cell projection. The protein resides in the lamellipodium. It is found in the ruffle membrane. The protein localises to the cell membrane. Its function is as follows. Tumor suppressor. Promotes rapid degradation of CTNNB1 and participates in Wnt signaling as a negative regulator. APC activity is correlated with its phosphorylation state. Activates the GEF activity of SPATA13 and ARHGEF4. Plays a role in hepatocyte growth factor (HGF)-induced cell migration. Required for MMP9 up-regulation via the JNK signaling pathway in colorectal tumor cells. Associates with both microtubules and actin filaments, components of the cytoskeleton. Plays a role in mediating the organization of F-actin into ordered bundles. Functions downstream of Rho GTPases and DIAPH1 to selectively stabilize microtubules. Acts as a mediator of ERBB2-dependent stabilization of microtubules at the cell cortex. It is required for the localization of MACF1 to the cell membrane and this localization of MACF1 is critical for its function in microtubule stabilization. This chain is Adenomatous polyposis coli protein (Apc), found in Rattus norvegicus (Rat).